The primary structure comprises 142 residues: MDLPEDQARFTNSYSLRTTSMETPREVSRSGRLYQSASRSQMAYSRPTMSIISRTSSWRTSPRPLPPPQVPSLMNSILTSRTQQSSPKLTNSASPNLRRKSSLGRLSMDRHGTTLQRTNSGFSTKETEMPRLLDRSESLSRY.

The disordered stretch occupies residues 1-142 (MDLPEDQARF…LDRSESLSRY (142 aa)). Polar residues-rich tracts occupy residues 9–22 (RFTNSYSLRTTSME) and 33–43 (LYQSASRSQMA). Low complexity predominate over residues 50–62 (SIISRTSSWRTSP). Composition is skewed to polar residues over residues 74 to 95 (MNSILTSRTQQSSPKLTNSASP) and 113 to 124 (TTLQRTNSGFST). The span at 125–142 (KETEMPRLLDRSESLSRY) shows a compositional bias: basic and acidic residues.

This sequence belongs to the luteoviruses movement protein family.

Functionally, transports viral genome to neighboring plant cells directly through plasmosdesmata, without any budding. The movement protein allows efficient cell to cell propagation, by bypassing the host cell wall barrier. The sequence is that of Movement protein from Cicer arietinum (Chickpea).